We begin with the raw amino-acid sequence, 259 residues long: MRFDVITLFPELFGPFLVSGVTRRAYETGLVEVKLWNPRDFAEGSYRRVDDRPFGGGPGMVMMAEPLTLCLEQIRAERTAGGVADVPTVLFSPIGEALNHAGVEAWSASSGAVLVCGRYEGLDQRFIETHIDRQISLGDFVLSGGEIAAMALLDAVARLQPGVLNDEGSHQLDSFNPALDGLLDCPHYTRPESWRGQPVPPILLSGNHAQIERWRREERLALTQRQRPELVQKARAAGHLTARDEAFLADLFENPEQDA.

Residues G117 and 137–142 each bind S-adenosyl-L-methionine; that span reads LGDFVL.

The protein belongs to the RNA methyltransferase TrmD family. As to quaternary structure, homodimer.

Its subcellular location is the cytoplasm. It catalyses the reaction guanosine(37) in tRNA + S-adenosyl-L-methionine = N(1)-methylguanosine(37) in tRNA + S-adenosyl-L-homocysteine + H(+). Functionally, specifically methylates guanosine-37 in various tRNAs. The polypeptide is tRNA (guanine-N(1)-)-methyltransferase (Polaromonas sp. (strain JS666 / ATCC BAA-500)).